A 562-amino-acid chain; its full sequence is Formate--tetrahydrofolate ligase (562 aa).

71–78 (TPAGEGKS) is a binding site for ATP.

Belongs to the formate--tetrahydrofolate ligase family.

The enzyme catalyses (6S)-5,6,7,8-tetrahydrofolate + formate + ATP = (6R)-10-formyltetrahydrofolate + ADP + phosphate. It participates in one-carbon metabolism; tetrahydrofolate interconversion. This is Formate--tetrahydrofolate ligase from Bacillus cereus (strain Q1).